A 425-amino-acid chain; its full sequence is Lysosome-associated membrane glycoprotein 2 (425 aa).

An N-terminal signal peptide occupies residues 1 to 27 (MAPPRCPAGLALLLLLLGACGFFQSYA). The tract at residues 28 to 192 (VEVDVKDASN…SKKESRCYAD (165 aa)) is first lumenal domain. Residues 28–389 (VEVDVKDASN…EECFADSDLN (362 aa)) lie on the Lumenal side of the membrane. N-linked (GlcNAc...) asparagine glycans are attached at residues N37, N56, N62, N74, N100, N105, N120, N163, N170, N179, N206, N232, N239, N252, N276, N287, N298, N312, N320, and N331. C40 and C78 are oxidised to a cystine. C153 and C189 form a disulfide bridge. A hinge region spans residues 193–238 (TPTAAPTVLPTVANVTTASTTISPAPTTAPKPAENPVTGNYSLKTG). Residues 239-390 (NKTCLLATVG…ECFADSDLNF (152 aa)) are second lumenal domain. C242 and C274 are joined by a disulfide. An intrachain disulfide couples C345 to C382. The helical transmembrane segment at 390 to 414 (FLIPVAVGMALGFLIILVFISYIIG) threads the bilayer. Residues 415 to 425 (RRKSRTGYQSV) are Cytoplasmic-facing. The segment at 416 to 419 (RKSR) is important for binding and subsequent lysosomal degradation of target proteins.

Belongs to the LAMP family. As to quaternary structure, monomer. Forms large homooligomers. In terms of processing, extensively N-glycosylated. Contains a minor proportion of O-linked glycans.

It localises to the lysosome membrane. Its subcellular location is the endosome membrane. It is found in the cell membrane. The protein resides in the cytoplasmic vesicle. The protein localises to the autophagosome membrane. Lysosomal membrane glycoprotein which plays an important role in lysosome biogenesis, lysosomal pH regulation and autophagy. Plays an important role in chaperone-mediated autophagy, a process that mediates lysosomal degradation of proteins in response to various stresses and as part of the normal turnover of proteins with a long biological half-live. In the chaperone-mediated autophagy, acts downstream of chaperones, such as HSPA8/HSC70, which recognize and bind substrate proteins and mediate their recruitment to lysosomes, where target proteins bind LAMP2. Plays a role in lysosomal protein degradation in response to starvation. Required for the fusion of autophagosomes with lysosomes during autophagy. This Gallus gallus (Chicken) protein is Lysosome-associated membrane glycoprotein 2 (LAMP2).